We begin with the raw amino-acid sequence, 565 residues long: NAD-dependent malic enzyme (565 aa).

Tyr-104 functions as the Proton donor in the catalytic mechanism. NAD(+) is bound at residue Arg-157. The Proton acceptor role is filled by Lys-175. 3 residues coordinate a divalent metal cation: Glu-246, Asp-247, and Asp-270. NAD(+)-binding residues include Asp-270 and Asn-418.

Belongs to the malic enzymes family. As to quaternary structure, homotetramer. It depends on Mg(2+) as a cofactor. Mn(2+) serves as cofactor.

It catalyses the reaction (S)-malate + NAD(+) = pyruvate + CO2 + NADH. It carries out the reaction oxaloacetate + H(+) = pyruvate + CO2. This chain is NAD-dependent malic enzyme, found in Escherichia coli O9:H4 (strain HS).